The chain runs to 461 residues: tRNA modification GTPase MnmE (461 aa).

Arginine 23, glutamate 88, and arginine 127 together coordinate (6S)-5-formyl-5,6,7,8-tetrahydrofolate. In terms of domain architecture, TrmE-type G spans 223-383 (GLNTVIVGKP…LKECIKNLFF (161 aa)). Residue asparagine 233 coordinates K(+). GTP-binding positions include 233-238 (NVGKSS), 252-258 (TEIPGTT), and 277-280 (DTAG). Serine 237 is a Mg(2+) binding site. Positions 252, 254, and 257 each coordinate K(+). Threonine 258 provides a ligand contact to Mg(2+). Residue lysine 461 coordinates (6S)-5-formyl-5,6,7,8-tetrahydrofolate.

It belongs to the TRAFAC class TrmE-Era-EngA-EngB-Septin-like GTPase superfamily. TrmE GTPase family. In terms of assembly, homodimer. Heterotetramer of two MnmE and two MnmG subunits. K(+) is required as a cofactor.

The protein localises to the cytoplasm. Functionally, exhibits a very high intrinsic GTPase hydrolysis rate. Involved in the addition of a carboxymethylaminomethyl (cmnm) group at the wobble position (U34) of certain tRNAs, forming tRNA-cmnm(5)s(2)U34. The chain is tRNA modification GTPase MnmE from Clostridium botulinum (strain Loch Maree / Type A3).